We begin with the raw amino-acid sequence, 114 residues long: Lymphotactin (114 aa).

A signal peptide spans 1 to 21; it reads MRLLLLTFLGVCCLTPWVVEG. Cys-32 and Cys-69 form a disulfide bridge. Residues 92-114 form a disordered region; that stretch reads KNMAETVPTGAQRSTSTAITLTG. The span at 100 to 114 shows a compositional bias: polar residues; the sequence is TGAQRSTSTAITLTG.

It belongs to the intercrine gamma family. In terms of tissue distribution, expressed in activated CD8(+) T cells. In the thymus, expressed by medullary thymic epithelial cells.

The protein localises to the secreted. Chemotactic activity for lymphocytes but not for monocytes or neutrophils. In thymus, mediates medullary accumulation of thymic dendritic cells and contributes to regulatoy T cell development, playing a role in self-tolerance establishment. The polypeptide is Lymphotactin (Xcl1) (Mus musculus (Mouse)).